A 248-amino-acid polypeptide reads, in one-letter code: Granzyme-like protein 2 (248 aa).

The first 18 residues, 1–18, serve as a signal peptide directing secretion; the sequence is MFLFLIFLVAVLPVNTEG. Positions 19 to 20 are cleaved as a propeptide — activation peptide; the sequence is GE. In terms of domain architecture, Peptidase S1 spans 21–243; that stretch reads IVWGTESKPH…FIPWIQKTMK (223 aa). C50 and C66 are joined by a disulfide. Active-site charge relay system residues include H65 and D108. 2 disulfides stabilise this stretch: C142/C207 and C172/C186. N-linked (GlcNAc...) asparagine glycosylation is found at N152 and N180. Catalysis depends on S201, which acts as the Charge relay system.

Belongs to the peptidase S1 family. Granzyme subfamily. Duodenum, lung and spleen.

This enzyme is necessary for target cell lysis in cell-mediated immune responses. The polypeptide is Granzyme-like protein 2 (Rattus norvegicus (Rat)).